Consider the following 208-residue polypeptide: LexA repressor (208 aa).

A DNA-binding region (H-T-H motif) is located at residues 29–49 (VREICGAVGLSSTSTVHGHIN). Active-site for autocatalytic cleavage activity residues include serine 129 and lysine 167.

Belongs to the peptidase S24 family. Homodimer.

It catalyses the reaction Hydrolysis of Ala-|-Gly bond in repressor LexA.. Functionally, represses a number of genes involved in the response to DNA damage (SOS response), including recA and lexA. In the presence of single-stranded DNA, RecA interacts with LexA causing an autocatalytic cleavage which disrupts the DNA-binding part of LexA, leading to derepression of the SOS regulon and eventually DNA repair. This chain is LexA repressor, found in Limosilactobacillus fermentum (strain NBRC 3956 / LMG 18251) (Lactobacillus fermentum).